The sequence spans 422 residues: Serpin A11 (422 aa).

The signal sequence occupies residues 1–24 (MGPVWLWLLIAELLLPVHYQPSSA). Residues 25-45 (HGDKSLGAPQPASHQSLEPAP) form a disordered region. Asparagine 106, asparagine 169, asparagine 350, and asparagine 385 each carry an N-linked (GlcNAc...) asparagine glycan.

Belongs to the serpin family.

The protein resides in the secreted. The protein is Serpin A11 (Serpina11) of Rattus norvegicus (Rat).